We begin with the raw amino-acid sequence, 215 residues long: ATP phosphoribosyltransferase (215 aa).

Belongs to the ATP phosphoribosyltransferase family. Short subfamily. As to quaternary structure, heteromultimer composed of HisG and HisZ subunits.

Its subcellular location is the cytoplasm. The catalysed reaction is 1-(5-phospho-beta-D-ribosyl)-ATP + diphosphate = 5-phospho-alpha-D-ribose 1-diphosphate + ATP. The protein operates within amino-acid biosynthesis; L-histidine biosynthesis; L-histidine from 5-phospho-alpha-D-ribose 1-diphosphate: step 1/9. Catalyzes the condensation of ATP and 5-phosphoribose 1-diphosphate to form N'-(5'-phosphoribosyl)-ATP (PR-ATP). Has a crucial role in the pathway because the rate of histidine biosynthesis seems to be controlled primarily by regulation of HisG enzymatic activity. This is ATP phosphoribosyltransferase from Prochlorococcus marinus (strain MIT 9215).